Here is a 558-residue protein sequence, read N- to C-terminus: Formate--tetrahydrofolate ligase (558 aa).

67–74 (TPAGEGKT) is a binding site for ATP.

It belongs to the formate--tetrahydrofolate ligase family.

It catalyses the reaction (6S)-5,6,7,8-tetrahydrofolate + formate + ATP = (6R)-10-formyltetrahydrofolate + ADP + phosphate. Its pathway is one-carbon metabolism; tetrahydrofolate interconversion. In Sphingobium sp. (strain NBRC 103272 / SYK-6), this protein is Formate--tetrahydrofolate ligase.